The primary structure comprises 307 residues: UDP-3-O-acyl-N-acetylglucosamine deacetylase (307 aa).

Positions 78, 235, and 239 each coordinate Zn(2+). The active-site Proton donor is the histidine 262.

The protein belongs to the LpxC family. Zn(2+) is required as a cofactor.

The enzyme catalyses a UDP-3-O-[(3R)-3-hydroxyacyl]-N-acetyl-alpha-D-glucosamine + H2O = a UDP-3-O-[(3R)-3-hydroxyacyl]-alpha-D-glucosamine + acetate. It functions in the pathway glycolipid biosynthesis; lipid IV(A) biosynthesis; lipid IV(A) from (3R)-3-hydroxytetradecanoyl-[acyl-carrier-protein] and UDP-N-acetyl-alpha-D-glucosamine: step 2/6. Functionally, catalyzes the hydrolysis of UDP-3-O-myristoyl-N-acetylglucosamine to form UDP-3-O-myristoylglucosamine and acetate, the committed step in lipid A biosynthesis. The sequence is that of UDP-3-O-acyl-N-acetylglucosamine deacetylase from Geotalea uraniireducens (strain Rf4) (Geobacter uraniireducens).